A 576-amino-acid polypeptide reads, in one-letter code: Lysine--tRNA ligase (576 aa).

Mg(2+)-binding residues include E412 and E419.

It belongs to the class-II aminoacyl-tRNA synthetase family. In terms of assembly, homodimer. Mg(2+) is required as a cofactor.

It is found in the cytoplasm. The catalysed reaction is tRNA(Lys) + L-lysine + ATP = L-lysyl-tRNA(Lys) + AMP + diphosphate. This Phocaeicola vulgatus (strain ATCC 8482 / DSM 1447 / JCM 5826 / CCUG 4940 / NBRC 14291 / NCTC 11154) (Bacteroides vulgatus) protein is Lysine--tRNA ligase.